The sequence spans 551 residues: HTH-type transcriptional regulator SgrR (551 aa).

An HTH marR-type domain is found at 1–116; sequence MPSARLQQQF…LVSHLGRSFR (116 aa). A DNA-binding region (H-T-H motif) is located at residues 26 to 49; the sequence is LNELAALLSCSRRHMRTLLNTMQD. The interval 163–492 is solute-binding; sequence ELEADIAHHW…IDWQADAARW (330 aa).

Activates the small RNA gene sgrS under glucose-phosphate stress conditions as well as yfdZ. Represses its own transcription under both stress and non-stress conditions. Might act as a sensor of the intracellular accumulation of phosphoglucose by binding these molecules in its C-terminal solute-binding domain. The polypeptide is HTH-type transcriptional regulator SgrR (Shigella flexneri serotype 5b (strain 8401)).